We begin with the raw amino-acid sequence, 192 residues long: Ubiquitin-conjugating enzyme E2 27 (192 aa).

The 149-residue stretch at 2-150 (IDFSRIQKEL…ARYWTETFAK (149 aa)) folds into the UBC core domain. Cys88 serves as the catalytic Glycyl thioester intermediate. The UBA domain maps to 153–192 (SLEEKVKRLVEMGFGDAQVRSAIESSGGDENLALEKLCSA).

It belongs to the ubiquitin-conjugating enzyme family. As to expression, expressed in seeds, pistils, siliques, hypocotyls and leaves.

It catalyses the reaction S-ubiquitinyl-[E1 ubiquitin-activating enzyme]-L-cysteine + [E2 ubiquitin-conjugating enzyme]-L-cysteine = [E1 ubiquitin-activating enzyme]-L-cysteine + S-ubiquitinyl-[E2 ubiquitin-conjugating enzyme]-L-cysteine.. It functions in the pathway protein modification; protein ubiquitination. Functionally, accepts the ubiquitin from the E1 complex and catalyzes its covalent attachment to other proteins. The polypeptide is Ubiquitin-conjugating enzyme E2 27 (UBC27) (Arabidopsis thaliana (Mouse-ear cress)).